A 350-amino-acid chain; its full sequence is GTPase Obg (350 aa).

The 159-residue stretch at 1–159 (MKLVDEAEIL…RLLKLELRLL (159 aa)) folds into the Obg domain. The disordered stretch occupies residues 127–146 (NMHFKSSVNRAPRQSTTGEE). The segment covering 130 to 143 (FKSSVNRAPRQSTT) has biased composition (polar residues). An OBG-type G domain is found at 160–337 (ADVGLLGFPN…IMKDVMAFFD (178 aa)). GTP is bound by residues 166 to 173 (GFPNAGKS), 191 to 195 (FTTLY), 213 to 216 (DVPG), 287 to 290 (NKAD), and 318 to 320 (SAL). 2 residues coordinate Mg(2+): serine 173 and threonine 193.

It belongs to the TRAFAC class OBG-HflX-like GTPase superfamily. OBG GTPase family. As to quaternary structure, monomer. The cofactor is Mg(2+).

Its subcellular location is the cytoplasm. Functionally, an essential GTPase which binds GTP, GDP and possibly (p)ppGpp with moderate affinity, with high nucleotide exchange rates and a fairly low GTP hydrolysis rate. Plays a role in control of the cell cycle, stress response, ribosome biogenesis and in those bacteria that undergo differentiation, in morphogenesis control. The sequence is that of GTPase Obg from Xanthomonas oryzae pv. oryzae (strain MAFF 311018).